The following is a 222-amino-acid chain: 7-carboxy-7-deazaguanine synthase (222 aa).

Substrate contacts are provided by residues 16 to 18 and arginine 31; that span reads LQG. The 201-residue stretch at 22–222 folds into the Radical SAM core domain; that stretch reads NLGRPAVFVR…IMAWGNARGK (201 aa). The [4Fe-4S] cluster site is built by cysteine 35, cysteine 39, and cysteine 42. Mg(2+) is bound at residue threonine 44. Threonine 77 provides a ligand contact to substrate. S-adenosyl-L-methionine-binding positions include glycine 79 and 126–128; that span reads SPK.

Belongs to the radical SAM superfamily. 7-carboxy-7-deazaguanine synthase family. In terms of assembly, homodimer. [4Fe-4S] cluster serves as cofactor. S-adenosyl-L-methionine is required as a cofactor. The cofactor is Mg(2+).

The catalysed reaction is 6-carboxy-5,6,7,8-tetrahydropterin + H(+) = 7-carboxy-7-deazaguanine + NH4(+). It participates in purine metabolism; 7-cyano-7-deazaguanine biosynthesis. In terms of biological role, catalyzes the complex heterocyclic radical-mediated conversion of 6-carboxy-5,6,7,8-tetrahydropterin (CPH4) to 7-carboxy-7-deazaguanine (CDG), a step common to the biosynthetic pathways of all 7-deazapurine-containing compounds. The polypeptide is 7-carboxy-7-deazaguanine synthase (Pyrobaculum aerophilum (strain ATCC 51768 / DSM 7523 / JCM 9630 / CIP 104966 / NBRC 100827 / IM2)).